Here is a 179-residue protein sequence, read N- to C-terminus: Isopentenyl-diphosphate Delta-isomerase (179 aa).

The Mn(2+) site is built by histidine 24 and histidine 30. The Nudix hydrolase domain maps to 28–160 (LLHRAFSIFI…PEKFTVWFLT (133 aa)). Cysteine 65 is an active-site residue. Residue histidine 67 coordinates Mn(2+). Residue glutamate 85 coordinates Mg(2+). Positions 110 and 112 each coordinate Mn(2+). Residue glutamate 112 is part of the active site.

This sequence belongs to the IPP isomerase type 1 family. In terms of assembly, homodimer. The cofactor is Mg(2+). It depends on Mn(2+) as a cofactor.

The protein resides in the cytoplasm. The enzyme catalyses isopentenyl diphosphate = dimethylallyl diphosphate. The protein operates within isoprenoid biosynthesis; dimethylallyl diphosphate biosynthesis; dimethylallyl diphosphate from isopentenyl diphosphate: step 1/1. Its function is as follows. Catalyzes the 1,3-allylic rearrangement of the homoallylic substrate isopentenyl (IPP) to its highly electrophilic allylic isomer, dimethylallyl diphosphate (DMAPP). The chain is Isopentenyl-diphosphate Delta-isomerase from Serratia proteamaculans (strain 568).